A 699-amino-acid polypeptide reads, in one-letter code: MAEGQSPENSPPAPPPPSPPSPPSSNDQQTTSPPPSDNQETTSPPPPSSPDIAPPPQQQQESPPPPLPENSSDGSSSSSPPPPSDSSSQSQSPPPPSTSPPQQSDNNGNKGNNNENNKGNDGSSGDGGNKNMSHTPPPPSKTSDHSSHSQPRSLAPPTSNSGSNSSSNDGLNIGAVIGLVAAAGILFIVMILLCVCCFRKKKKKSKLDQMPYYGSNAYPAGKTGGDQYYNQNAATQQQQHYNQNDHIVNLPPPPGSMGTNWVSSPPPPPPGNWQPMPSPPAPVSGGANVIQSGEMSSNFSSGPYAPSLPPPHPSVALGFNNSTFTYEELASATQGFSKDRLLGQGGFGYVHKGILPNGKEIAVKSLKAGSGQGEREFQAEVEIISRVHHRHLVSLVGYCSNAGGQRLLVYEFLPNDTLEFHLHGKSGTVMDWPTRLKIALGSAKGLAYLHEDCHPKIIHRDIKASNILLDHNFEAKVADFGLAKLSQDNNTHVSTRVMGTFGYLAPEYASSGKLTEKSDVFSFGVMLLELITGRGPVDLSGDMEDSLVDWARPLCMRVAQDGEYGELVDPFLEHQYEPYEMARMVACAAAAVRHSGRRRPKMSQIVRTLEGDASLDDLDDGVKPKQSSSGGEGSSDYEMGTYGAEMRKFRKVTLESRDYGASSEYGATSEYGLDPSSSSSEEMHIGGSTSKTTTTNRGI.

Residues 1 to 167 (MAEGQSPENS…TSNSGSNSSS (167 aa)) are disordered. The Extracellular segment spans residues 1 to 172 (MAEGQSPENS…SNSSSNDGLN (172 aa)). 2 stretches are compositionally biased toward pro residues: residues 9–23 (NSPP…PSPP) and 43–68 (SPPP…PPLP). An N-linked (GlcNAc...) asparagine glycan is attached at Asn-70. Residues 100–121 (PPQQSDNNGNKGNNNENNKGND) are compositionally biased toward low complexity. N-linked (GlcNAc...) asparagine glycosylation occurs at Asn-131. Polar residues predominate over residues 148-158 (HSQPRSLAPPT). Asn-164 is a glycosylation site (N-linked (GlcNAc...) asparagine). A helical transmembrane segment spans residues 173–193 (IGAVIGLVAAAGILFIVMILL). The Cytoplasmic portion of the chain corresponds to 194 to 699 (CVCCFRKKKK…SKTTTTNRGI (506 aa)). Position 325 is a phosphothreonine (Thr-325). The Protein kinase domain maps to 336-615 (FSKDRLLGQG…VRTLEGDASL (280 aa)). ATP is bound by residues 342–350 (LGQGGFGYV) and Lys-364. A Phosphotyrosine modification is found at Tyr-410. Asp-461 serves as the catalytic Proton acceptor. Phosphoserine occurs at positions 465 and 494. A phosphothreonine mark is found at Thr-495 and Thr-500. Tyr-508 carries the post-translational modification Phosphotyrosine. Disordered stretches follow at residues 609 to 639 (LEGD…DYEM) and 658 to 699 (DYGA…NRGI). Residues 687–699 (GSTSKTTTTNRGI) show a composition bias toward polar residues.

The protein belongs to the protein kinase superfamily. Ser/Thr protein kinase family. As to expression, mostly expressed in flower buds.

The protein resides in the cell membrane. It catalyses the reaction L-seryl-[protein] + ATP = O-phospho-L-seryl-[protein] + ADP + H(+). It carries out the reaction L-threonyl-[protein] + ATP = O-phospho-L-threonyl-[protein] + ADP + H(+). This is Proline-rich receptor-like protein kinase PERK7 (PERK7) from Arabidopsis thaliana (Mouse-ear cress).